The chain runs to 29 residues: NADH dehydrogenase [ubiquinone] 1 beta subcomplex subunit 10 (29 aa).

The disordered stretch occupies residues Gly1–Leu29.

The protein belongs to the complex I NDUFB10 subunit family. Complex I is composed of about 45 different subunits.

Its subcellular location is the mitochondrion inner membrane. In terms of biological role, accessory subunit of the mitochondrial membrane respiratory chain NADH dehydrogenase (Complex I), that is believed not to be involved in catalysis. Complex I functions in the transfer of electrons from NADH to the respiratory chain. The immediate electron acceptor for the enzyme is believed to be ubiquinone. The polypeptide is NADH dehydrogenase [ubiquinone] 1 beta subcomplex subunit 10 (Solanum tuberosum (Potato)).